The sequence spans 102 residues: MKKIRKGDSVVLLTGRDKGKQGTVTAVLENKLVIEGVNIYKKSVKPNPAAGVTGGMIDKTMPVHISNVAVVDGNGKPSRVGIKLVDGKKQRFLKTTGATLSA.

This sequence belongs to the universal ribosomal protein uL24 family. Part of the 50S ribosomal subunit.

Its function is as follows. One of two assembly initiator proteins, it binds directly to the 5'-end of the 23S rRNA, where it nucleates assembly of the 50S subunit. In terms of biological role, one of the proteins that surrounds the polypeptide exit tunnel on the outside of the subunit. This chain is Large ribosomal subunit protein uL24, found in Polynucleobacter asymbioticus (strain DSM 18221 / CIP 109841 / QLW-P1DMWA-1) (Polynucleobacter necessarius subsp. asymbioticus).